Reading from the N-terminus, the 501-residue chain is ATP-dependent rRNA helicase RRP3 (501 aa).

A coiled-coil region spans residues 3-44 (KIVKRKEKKANDELTSLAEKIRAKALENQKKLIEAEKEGGSE). The interval 36–79 (EAEKEGGSESDSEEDATAEKKKVLKSKSKSTVSTQNENTNEDES) is disordered. Phosphoserine is present on residues S43, S45, and S47. Residues 81-109 (ESFSELNLVPELIQACKNLNYSKPTPIQS) carry the Q motif motif. Residues 112–284 (IPPALEGHDI…RASLTNPVKC (173 aa)) form the Helicase ATP-binding domain. 125–132 (AQTGSGKT) contacts ATP. The DEAD box signature appears at 231–234 (DEAD). A Helicase C-terminal domain is found at 307–461 (LKNTYLIYLL…NIILTLRDSV (155 aa)). Positions 480–501 (IARGKGRRGRMMTRENMDMGER) are disordered. Basic and acidic residues predominate over residues 491–501 (MTRENMDMGER).

Belongs to the DEAD box helicase family. DDX47/RRP3 subfamily. In terms of assembly, interacts with the SSU processome.

The protein resides in the nucleus. The catalysed reaction is ATP + H2O = ADP + phosphate + H(+). Its function is as follows. ATP-dependent rRNA helicase required for pre-ribosomal RNA processing. Involved in the maturation of the 35S-pre-rRNA and to its cleavage to mature 18S rRNA. The protein is ATP-dependent rRNA helicase RRP3 of Saccharomyces cerevisiae (strain YJM789) (Baker's yeast).